A 486-amino-acid chain; its full sequence is Ribulose bisphosphate carboxylase large chain (486 aa).

Substrate-binding residues include N126 and T176. The Proton acceptor role is filled by K178. K180 contributes to the substrate binding site. Mg(2+) is bound by residues K204, D206, and E207. K204 carries the N6-carboxylysine modification. Residue H296 is the Proton acceptor of the active site. R297, H329, and S381 together coordinate substrate.

The protein belongs to the RuBisCO large chain family. Type I subfamily. Heterohexadecamer of 8 large chains and 8 small chains. Mg(2+) serves as cofactor.

It carries out the reaction 2 (2R)-3-phosphoglycerate + 2 H(+) = D-ribulose 1,5-bisphosphate + CO2 + H2O. It catalyses the reaction D-ribulose 1,5-bisphosphate + O2 = 2-phosphoglycolate + (2R)-3-phosphoglycerate + 2 H(+). Its function is as follows. RuBisCO catalyzes two reactions: the carboxylation of D-ribulose 1,5-bisphosphate, the primary event in carbon dioxide fixation, as well as the oxidative fragmentation of the pentose substrate. Both reactions occur simultaneously and in competition at the same active site. This is Ribulose bisphosphate carboxylase large chain from Methylacidiphilum infernorum (isolate V4) (Methylokorus infernorum (strain V4)).